We begin with the raw amino-acid sequence, 249 residues long: MAFEVDNDSFPGAIEGLKALKMRGTGVSMPNKQLACEYVDELTPAAKLVGAINTIVNDDGYLRGYNTDGTGHIRAIKESGFDIKGKTMVLLGAGGASTAIGAQGAIEGLKEIKLFNRRDEFFDKALAFAQRVNENTDCVVTDTDLADQQAFAEALASADILTNGTKVGMKPLENESLVNDISLLHPGLLVTECVYNPHMTKLLQQAQQAGCKTIDGYGMLLWQGAEQFTLWTGKDFPLEYVKQVMGFGA.

Substrate-binding residues include Lys32 and Asp68. Residues 93–96 (AGGA), 116–119 (NRRD), Lys166, 193–196 (CVYN), and Gly216 each bind NAD(+).

It belongs to the shikimate dehydrogenase family. Homodimer.

It catalyses the reaction L-quinate + NAD(+) = 3-dehydroquinate + NADH + H(+). It carries out the reaction L-quinate + NADP(+) = 3-dehydroquinate + NADPH + H(+). The catalysed reaction is shikimate + NADP(+) = 3-dehydroshikimate + NADPH + H(+). The enzyme catalyses shikimate + NAD(+) = 3-dehydroshikimate + NADH + H(+). It functions in the pathway metabolic intermediate biosynthesis; chorismate biosynthesis; chorismate from D-erythrose 4-phosphate and phosphoenolpyruvate: step 4/7. Functionally, the actual biological function of YdiB remains unclear, nor is it known whether 3-dehydroshikimate or quinate represents the natural substrate. Catalyzes the reversible NAD-dependent reduction of both 3-dehydroshikimate (DHSA) and 3-dehydroquinate to yield shikimate (SA) and quinate, respectively. It can use both NAD or NADP for catalysis, however it has higher catalytic efficiency with NAD. This chain is Quinate/shikimate dehydrogenase, found in Shigella flexneri serotype 5b (strain 8401).